Consider the following 349-residue polypeptide: tRNA pseudouridine synthase D (349 aa).

F27 lines the substrate pocket. D80 serves as the catalytic Nucleophile. N129 contributes to the substrate binding site. The TRUD domain maps to 155–303 (GVPNYFGAQR…VEAARRAMLL (149 aa)). F329 contacts substrate.

It belongs to the pseudouridine synthase TruD family.

It catalyses the reaction uridine(13) in tRNA = pseudouridine(13) in tRNA. Responsible for synthesis of pseudouridine from uracil-13 in transfer RNAs. This Enterobacter sp. (strain 638) protein is tRNA pseudouridine synthase D.